The primary structure comprises 348 residues: Holliday junction branch migration complex subunit RuvB (348 aa).

Positions 1 to 20 are disordered; that stretch reads MKPPARMVSPERRSDDVGDT. Positions 1 to 183 are large ATPase domain (RuvB-L); the sequence is MKPPARMVSP…FGIPIRLNFY (183 aa). Residues Leu22, Arg23, Gly64, Lys67, Thr68, Thr69, 130–132, Arg173, Tyr183, and Arg220 each bind ATP; that span reads EDF. Thr68 is a Mg(2+) binding site. A small ATPAse domain (RuvB-S) region spans residues 184–254; sequence TVEELEGIVT…IADHALSALE (71 aa). The tract at residues 257–348 is head domain (RuvB-H); that stretch reads AAGLDAMDRR…QIGLFGNDDD (92 aa). Residues Arg293, Arg312, and Arg317 each contribute to the DNA site.

This sequence belongs to the RuvB family. In terms of assembly, homohexamer. Forms an RuvA(8)-RuvB(12)-Holliday junction (HJ) complex. HJ DNA is sandwiched between 2 RuvA tetramers; dsDNA enters through RuvA and exits via RuvB. An RuvB hexamer assembles on each DNA strand where it exits the tetramer. Each RuvB hexamer is contacted by two RuvA subunits (via domain III) on 2 adjacent RuvB subunits; this complex drives branch migration. In the full resolvosome a probable DNA-RuvA(4)-RuvB(12)-RuvC(2) complex forms which resolves the HJ.

The protein localises to the cytoplasm. It carries out the reaction ATP + H2O = ADP + phosphate + H(+). In terms of biological role, the RuvA-RuvB-RuvC complex processes Holliday junction (HJ) DNA during genetic recombination and DNA repair, while the RuvA-RuvB complex plays an important role in the rescue of blocked DNA replication forks via replication fork reversal (RFR). RuvA specifically binds to HJ cruciform DNA, conferring on it an open structure. The RuvB hexamer acts as an ATP-dependent pump, pulling dsDNA into and through the RuvAB complex. RuvB forms 2 homohexamers on either side of HJ DNA bound by 1 or 2 RuvA tetramers; 4 subunits per hexamer contact DNA at a time. Coordinated motions by a converter formed by DNA-disengaged RuvB subunits stimulates ATP hydrolysis and nucleotide exchange. Immobilization of the converter enables RuvB to convert the ATP-contained energy into a lever motion, pulling 2 nucleotides of DNA out of the RuvA tetramer per ATP hydrolyzed, thus driving DNA branch migration. The RuvB motors rotate together with the DNA substrate, which together with the progressing nucleotide cycle form the mechanistic basis for DNA recombination by continuous HJ branch migration. Branch migration allows RuvC to scan DNA until it finds its consensus sequence, where it cleaves and resolves cruciform DNA. This Bradyrhizobium sp. (strain ORS 278) protein is Holliday junction branch migration complex subunit RuvB.